We begin with the raw amino-acid sequence, 651 residues long: Probable potassium transport system protein Kup (651 aa).

The next 12 helical transmembrane spans lie at 30–50 (LALA…LYSL), 71–91 (IISM…VIFV), 124–144 (LLLG…TPAI), 158–178 (PDAE…LFIV), 190–210 (FGPV…PWII), 233–253 (AMAF…EALY), 268–288 (WFGL…AMIL), 310–330 (LVTI…SGAF), 358–378 (IYIP…ILIF), 387–407 (AYGL…LVLA), 413–433 (WPMW…LSIF), and 437–457 (LLKI…VVII).

The protein belongs to the HAK/KUP transporter (TC 2.A.72) family.

It is found in the cell membrane. It carries out the reaction K(+)(in) + H(+)(in) = K(+)(out) + H(+)(out). Functionally, transport of potassium into the cell. Likely operates as a K(+):H(+) symporter. This is Probable potassium transport system protein Kup from Cutibacterium acnes (strain DSM 16379 / KPA171202) (Propionibacterium acnes).